The chain runs to 733 residues: Oligopeptide transporter 8 (733 aa).

A run of 14 helical transmembrane segments spans residues 42–62 (MWVL…FFWY), 66–86 (PLTI…HLMA), 115–135 (VLIT…HILS), 147–167 (FLPA…WAGL), 209–229 (FFVI…YLFT), 244–264 (SILV…SFGL), 281–301 (FFAS…ITPL), 357–377 (FAVT…HVLI), 413–433 (LWWF…ICIY), 442–462 (WWGA…VGVI), 531–551 (VGTL…MAEI), 596–616 (YSNI…VYLA), 644–664 (ASAV…HFVF), and 677–697 (VLSG…FLAL).

Belongs to the oligopeptide OPT transporter (TC 2.A.67.1) family.

The protein localises to the membrane. In terms of biological role, may be involved in the translocation of tetra- and pentapeptides across the cellular membrane in an energy-dependent manner. The chain is Oligopeptide transporter 8 (OPT8) from Arabidopsis thaliana (Mouse-ear cress).